The sequence spans 73 residues: Small ribosomal subunit protein bS18 (73 aa).

It belongs to the bacterial ribosomal protein bS18 family. In terms of assembly, part of the 30S ribosomal subunit. Forms a tight heterodimer with protein bS6.

In terms of biological role, binds as a heterodimer with protein bS6 to the central domain of the 16S rRNA, where it helps stabilize the platform of the 30S subunit. The sequence is that of Small ribosomal subunit protein bS18 from Prochlorococcus marinus subsp. pastoris (strain CCMP1986 / NIES-2087 / MED4).